The primary structure comprises 401 residues: 8-amino-7-oxononanoate synthase (401 aa).

Arg-24 lines the substrate pocket. Residue 111–112 coordinates pyridoxal 5'-phosphate; that stretch reads GF. His-137 provides a ligand contact to substrate. Residues Ser-183, His-211, and Thr-240 each contribute to the pyridoxal 5'-phosphate site. Lys-243 bears the N6-(pyridoxal phosphate)lysine mark. Thr-357 is a substrate binding site.

It belongs to the class-II pyridoxal-phosphate-dependent aminotransferase family. BioF subfamily. Homodimer. The cofactor is pyridoxal 5'-phosphate.

It carries out the reaction 6-carboxyhexanoyl-[ACP] + L-alanine + H(+) = (8S)-8-amino-7-oxononanoate + holo-[ACP] + CO2. The protein operates within cofactor biosynthesis; biotin biosynthesis. Its function is as follows. Catalyzes the decarboxylative condensation of pimeloyl-[acyl-carrier protein] and L-alanine to produce 8-amino-7-oxononanoate (AON), [acyl-carrier protein], and carbon dioxide. The protein is 8-amino-7-oxononanoate synthase of Xanthomonas campestris pv. campestris (strain B100).